The sequence spans 273 residues: Dermonecrotic toxin LarSicTox-alphaIB1b (273 aa).

Residue histidine 5 is part of the active site. Positions 25 and 27 each coordinate Mg(2+). The active-site Nucleophile is histidine 41. 2 cysteine pairs are disulfide-bonded: cysteine 45–cysteine 51 and cysteine 47–cysteine 190. Aspartate 85 lines the Mg(2+) pocket. A glycan (N-linked (GlcNAc...) asparagine) is linked at asparagine 250.

The protein belongs to the arthropod phospholipase D family. Class II subfamily. Mg(2+) is required as a cofactor. Expressed by the venom gland.

The protein resides in the secreted. It catalyses the reaction an N-(acyl)-sphingosylphosphocholine = an N-(acyl)-sphingosyl-1,3-cyclic phosphate + choline. It carries out the reaction an N-(acyl)-sphingosylphosphoethanolamine = an N-(acyl)-sphingosyl-1,3-cyclic phosphate + ethanolamine. The enzyme catalyses a 1-acyl-sn-glycero-3-phosphocholine = a 1-acyl-sn-glycero-2,3-cyclic phosphate + choline. The catalysed reaction is a 1-acyl-sn-glycero-3-phosphoethanolamine = a 1-acyl-sn-glycero-2,3-cyclic phosphate + ethanolamine. In terms of biological role, dermonecrotic toxins cleave the phosphodiester linkage between the phosphate and headgroup of certain phospholipids (sphingolipid and lysolipid substrates), forming an alcohol (often choline) and a cyclic phosphate. This toxin acts on sphingomyelin (SM). It may also act on ceramide phosphoethanolamine (CPE), lysophosphatidylcholine (LPC) and lysophosphatidylethanolamine (LPE), but not on lysophosphatidylserine (LPS), and lysophosphatidylglycerol (LPG). It acts by transphosphatidylation, releasing exclusively cyclic phosphate products as second products. Induces dermonecrosis, hemolysis, increased vascular permeability, edema, inflammatory response, and platelet aggregation. The chain is Dermonecrotic toxin LarSicTox-alphaIB1b from Loxosceles arizonica (Arizona brown spider).